A 291-amino-acid chain; its full sequence is ATP synthase gamma chain (291 aa).

It belongs to the ATPase gamma chain family. In terms of assembly, F-type ATPases have 2 components, CF(1) - the catalytic core - and CF(0) - the membrane proton channel. CF(1) has five subunits: alpha(3), beta(3), gamma(1), delta(1), epsilon(1). CF(0) has three main subunits: a, b and c.

The protein localises to the cell inner membrane. In terms of biological role, produces ATP from ADP in the presence of a proton gradient across the membrane. The gamma chain is believed to be important in regulating ATPase activity and the flow of protons through the CF(0) complex. This chain is ATP synthase gamma chain, found in Sinorhizobium medicae (strain WSM419) (Ensifer medicae).